Consider the following 724-residue polypeptide: Protein arginine N-methyltransferase 1.6 (724 aa).

SAM-dependent MTase PRMT-type domains lie at 61–388 and 395–721; these read NDQP…YNLK and HERT…IVTH. Catalysis depends on residues glutamate 183 and glutamate 192.

The protein belongs to the class I-like SAM-binding methyltransferase superfamily. Protein arginine N-methyltransferase family. PRMT7 subfamily.

Functionally, arginine methyltransferase that can both catalyze the formation of omega-N monomethylarginine (MMA) and symmetrical dimethylarginine (sDMA). The sequence is that of Protein arginine N-methyltransferase 1.6 (PRMT16) from Arabidopsis thaliana (Mouse-ear cress).